The sequence spans 451 residues: Phenolic glucoside malonyltransferase 2 (451 aa).

His-165 functions as the Proton acceptor in the catalytic mechanism. Residues 165–169 (HAVLD) carry the HXXXD motif motif. Residues His-270 and 272–273 (ST) each bind malonyl-CoA. Asp-395 functions as the Proton acceptor in the catalytic mechanism. Residues 395-399 (DFGWG) carry the DFGWG motif motif.

This sequence belongs to the plant acyltransferase family. Phenolic glucoside malonyltransferase subfamily.

The catalysed reaction is a flavonol 7-O-beta-D-glucoside + malonyl-CoA = a flavonol 7-O-(6-O-malonyl-beta-D-glucoside) + CoA. Its function is as follows. Malonyltransferase acting on xenobiotic glucosides. Has activity toward 2-Naphthol glucoside (2NAG), 1-Naphthol glucoside (1NAG), kaempferol 7-O-glucoside, hydroxycoumarin glucosides and phenol-glucosides, but not toward kaempferol 3-O-glucoside or daidzin. Prefers phenol glucosides rather than naphtol glucosides. In vivo, seems to be involved in the malonylation of 4-methylumbelliferone glucoside or 4-nitrophenyl glucoside while PMAT1 would be involved in the malonylation of 2-Naphthol glucoside. The sequence is that of Phenolic glucoside malonyltransferase 2 (PMAT2) from Arabidopsis thaliana (Mouse-ear cress).